The chain runs to 292 residues: UPF0696 protein C11orf68 (292 aa).

Residues 1–11 are compositionally biased toward low complexity; that stretch reads MAAAAAAAVAG. Residues 1–60 are disordered; the sequence is MAAAAAAAVAGVGRGGGGAEPRQERSRARGWAGVERSEGRRMEPGEELEEEGSPGGREDG. R29 carries the omega-N-methylarginine modification. Positions 35–44 are enriched in basic and acidic residues; sequence ERSEGRRMEP.

It belongs to the UPF0696 family.

The sequence is that of UPF0696 protein C11orf68 (C11orf68) from Homo sapiens (Human).